The chain runs to 129 residues: MPTYNQLVRFGRKSKIRKTKSPALESNPFKSGVCLVVKTVTPKKPNSALRKIATVRLSNKRTVNAYIPGEKHSVKEHDRVLVRGGQVPDLPGVKYHIVLGAYDIAGVKGRKQGRSRYGATRKQVAATKK.

It belongs to the universal ribosomal protein uS12 family. As to quaternary structure, part of the 30S ribosomal subunit. Contacts proteins S8 and S17. May interact with IF1 in the 30S initiation complex.

Its function is as follows. With S4 and S5 plays an important role in translational accuracy. In terms of biological role, interacts with and stabilizes bases of the 16S rRNA that are involved in tRNA selection in the A site and with the mRNA backbone. Located at the interface of the 30S and 50S subunits, it traverses the body of the 30S subunit contacting proteins on the other side and probably holding the rRNA structure together. The combined cluster of proteins S8, S12 and S17 appears to hold together the shoulder and platform of the 30S subunit. The protein is Small ribosomal subunit protein uS12 of Rickettsia typhi (strain ATCC VR-144 / Wilmington).